The chain runs to 373 residues: Protodeoxyviolaceinate monooxygenase (373 aa).

2–20 (KILVIGAGPAGLVFASQLK) lines the FAD pocket.

FAD serves as cofactor.

It catalyses the reaction protodeoxyviolaceinate + NADH + O2 + H(+) = protoviolaceinate + NAD(+) + H2O. The catalysed reaction is protodeoxyviolaceinate + NADPH + O2 + H(+) = protoviolaceinate + NADP(+) + H2O. Its pathway is pigment biosynthesis; violacein biosynthesis. Catalyzes the oxygenation of the 6-position of protodeoxyviolaceinate to form proviolacein. This Chromobacterium violaceum (strain ATCC 12472 / DSM 30191 / JCM 1249 / CCUG 213 / NBRC 12614 / NCIMB 9131 / NCTC 9757 / MK) protein is Protodeoxyviolaceinate monooxygenase (vioD).